Reading from the N-terminus, the 49-residue chain is DNA-directed RNA polymerase subunit Rpo12 (49 aa).

3 residues coordinate Zn(2+): C11, C27, and C30.

It belongs to the archaeal Rpo12/eukaryotic RPC10 RNA polymerase subunit family. As to quaternary structure, part of the RNA polymerase complex. Zn(2+) is required as a cofactor.

Its subcellular location is the cytoplasm. The protein localises to the chromosome. The catalysed reaction is RNA(n) + a ribonucleoside 5'-triphosphate = RNA(n+1) + diphosphate. DNA-dependent RNA polymerase (RNAP) catalyzes the transcription of DNA into RNA using the four ribonucleoside triphosphates as substrates. This chain is DNA-directed RNA polymerase subunit Rpo12, found in Thermococcus kodakarensis (strain ATCC BAA-918 / JCM 12380 / KOD1) (Pyrococcus kodakaraensis (strain KOD1)).